The sequence spans 331 residues: Protein-methionine-sulfoxide reductase catalytic subunit MsrP (331 aa).

The segment at residues 1 to 54 (MLIKTDRWLRGDDIPASEITPQHLFDQRRRLLAAAALGAAGAALSPWAARRAFA) is a signal peptide (tat-type signal). Mo-molybdopterin contacts are provided by residues N86, 89 to 90 (YE), C144, S179, N227, R232, and 243 to 245 (SAK).

It belongs to the MsrP family. As to quaternary structure, heterodimer of a catalytic subunit (MsrP) and a heme-binding subunit (MsrQ). The cofactor is Mo-molybdopterin. In terms of processing, predicted to be exported by the Tat system. The position of the signal peptide cleavage has not been experimentally proven.

It localises to the periplasm. The enzyme catalyses L-methionyl-[protein] + a quinone + H2O = L-methionyl-(S)-S-oxide-[protein] + a quinol. The catalysed reaction is L-methionyl-[protein] + a quinone + H2O = L-methionyl-(R)-S-oxide-[protein] + a quinol. Functionally, part of the MsrPQ system that repairs oxidized periplasmic proteins containing methionine sulfoxide residues (Met-O), using respiratory chain electrons. Thus protects these proteins from oxidative-stress damage caused by reactive species of oxygen and chlorine generated by the host defense mechanisms. MsrPQ is essential for the maintenance of envelope integrity under bleach stress, rescuing a wide series of structurally unrelated periplasmic proteins from methionine oxidation. The catalytic subunit MsrP is non-stereospecific, being able to reduce both (R-) and (S-) diastereoisomers of methionine sulfoxide. The sequence is that of Protein-methionine-sulfoxide reductase catalytic subunit MsrP from Ralstonia nicotianae (strain ATCC BAA-1114 / GMI1000) (Ralstonia solanacearum).